Consider the following 103-residue polypeptide: Histone H4 (103 aa).

Gly residues predominate over residues 1 to 14; that stretch reads MSGRGKGGKGLGKG. Residues 1-20 form a disordered region; the sequence is MSGRGKGGKGLGKGGAKRHR. An N6-(2-hydroxyisobutyryl)lysine; alternate mark is found at Lys6, Lys9, Lys13, Lys17, Lys32, and Lys45. Lys6 is modified (N6-acetyl-N6-methyllysine; alternate). An N6-butyryllysine; alternate mark is found at Lys6, Lys9, Lys13, Lys17, Lys32, and Lys45. Lys6 is subject to N6-glutaryllysine; alternate. An N6-propionyllysine; alternate modification is found at Lys9. Position 13 is an N6-acetyl-N6-methyllysine; alternate (Lys13). The residue at position 13 (Lys13) is an N6-glutaryllysine; alternate. N6-propionyllysine; alternate occurs at positions 17, 32, and 45. Residues 17 to 21 mediate DNA binding; it reads KRHRK. An N6-glutaryllysine; alternate modification is found at Lys32. Lys32 is modified (N6-succinyllysine; alternate). 4 positions are modified to N6-glutaryllysine; alternate: Lys60, Lys78, Lys80, and Lys92. Residue Lys60 is modified to N6-(2-hydroxyisobutyryl)lysine. N6-(2-hydroxyisobutyryl)lysine; alternate is present on residues Lys78, Lys80, and Lys92. An N6-butyryllysine; alternate mark is found at Lys78, Lys80, and Lys92. An N6-propionyllysine; alternate mark is found at Lys78, Lys80, and Lys92. Lys78 is subject to N6-succinyllysine. N6-succinyllysine; alternate is present on Lys92.

The protein belongs to the histone H4 family. In terms of assembly, the nucleosome is a histone octamer containing two molecules each of H2A, H2B, H3 and H4 assembled in one H3-H4 heterotetramer and two H2A-H2B heterodimers. The octamer wraps approximately 147 bp of DNA. Butyrylation of histones marks active promoters and competes with histone acetylation. Post-translationally, glutarylation at Lys-92 (H4K91glu) destabilizes nucleosomes by promoting dissociation of the H2A-H2B dimers from nucleosomes.

It is found in the nucleus. The protein resides in the chromosome. Core component of nucleosome. Nucleosomes wrap and compact DNA into chromatin, limiting DNA accessibility to the cellular machineries which require DNA as a template. Histones thereby play a central role in transcription regulation, DNA repair, DNA replication and chromosomal stability. DNA accessibility is regulated via a complex set of post-translational modifications of histones, also called histone code, and nucleosome remodeling. This is Histone H4 (H4.1) from Oikopleura dioica (Tunicate).